A 348-amino-acid polypeptide reads, in one-letter code: MRPFRTLVKVLQKIESSPLTKVFMAFIIVVLIGSYLEFLTQRNVKYSEIKNYFTAIWFTMETVTTVGYGDVVPVSNLGRVVAMLIMVSGIGLLGTLTATISAYLFQIRIERRGKLEKRLKNHTIICNWNAYTRNIIEGNRDEEAAPIVILSENTDNSEKYQNVFFVKGDCTSEDDLKNAAIEDAARVVIMSDIENNAIPEDLLDAKTLLSIFTVRKLNNAVEIIAEVRDEKNKKHAVSAGATEVLSVGELSSRLISRSISNPGLTDFILKSLSETEDFKIFSIEACGILPGMTVKDAASNLAEVCVIISVISKGKIEYPPDRSYKIGAGDYVVFLAKNKKEVEEAIKG.

The next 3 membrane-spanning stretches (helical) occupy residues 19–39 (LTKV…LEFL), 52–72 (YFTA…GDVV), and 80–100 (VVAM…TATI). Positions 120 to 246 (KNHTIICNWN…VSAGATEVLS (127 aa)) constitute an RCK N-terminal domain. One can recognise an RCK C-terminal domain in the interval 266 to 348 (DFILKSLSET…KKEVEEAIKG (83 aa)).

Heterooctamer composed of four full-length subunits and four soluble RCK domains.

Its subcellular location is the cell membrane. Its function is as follows. Calcium-gated potassium channel. Can also be activated by Mg(2+), Mn(2+) and Ni(2+). The protein is Calcium-gated potassium channel TvoK of Thermoplasma volcanium (strain ATCC 51530 / DSM 4299 / JCM 9571 / NBRC 15438 / GSS1).